Consider the following 884-residue polypeptide: Probable leucine--tRNA ligase, cytoplasmic (884 aa).

The 'HIGH' region signature appears at 40-50 (PYMNGKLHLGH). The 'KMSKS' region motif lies at 566 to 570 (KMSKS). Residue Lys-569 coordinates ATP.

It belongs to the class-I aminoacyl-tRNA synthetase family.

Its subcellular location is the cytoplasm. It catalyses the reaction tRNA(Leu) + L-leucine + ATP = L-leucyl-tRNA(Leu) + AMP + diphosphate. In Vairimorpha ceranae (strain BRL01) (Microsporidian parasite), this protein is Probable leucine--tRNA ligase, cytoplasmic.